Here is a 153-residue protein sequence, read N- to C-terminus: Calmodulin-like protein 4 (153 aa).

EF-hand domains are found at residues Asp-8–Cys-43, Pro-44–Gln-79, Asp-81–Lys-116, and Leu-117–Asp-152.

The protein belongs to the calmodulin family. In terms of assembly, associates with the IMAC/intermicrovillar adhesion complex.

It is found in the cell projection. The protein resides in the microvillus. As part of the intermicrovillar adhesion complex/IMAC plays a role in epithelial brush border differentiation, controlling microvilli organization and length. Acts as a light chain for MYO7B and is required for efficient targeting of the IMAC to the tips of border brush microvilli. The sequence is that of Calmodulin-like protein 4 (calml4) from Xenopus tropicalis (Western clawed frog).